Reading from the N-terminus, the 321-residue chain is Bifunctional methyltransferase/endonuclease (321 aa).

Positions 1–86 (MLSVDYENFD…PLGSAEKMRR (86 aa)) are probable methylated-DNA--protein-cysteine methyltransferase. C61 is a catalytic residue. The interval 87 to 318 (LIRDGITITN…YDFSTRNTAI (232 aa)) is endonuclease V. Mg(2+) is bound by residues D145 and D204.

It in the N-terminal section; belongs to the MGMT family. This sequence in the C-terminal section; belongs to the endonuclease V family. Requires Mg(2+) as cofactor.

The protein resides in the cytoplasm. It carries out the reaction Endonucleolytic cleavage at apurinic or apyrimidinic sites to products with a 5'-phosphate.. DNA repair enzyme involved in the repair of deaminated bases. Selectively cleaves double-stranded DNA at the second phosphodiester bond 3' to a deoxyinosine leaving behind the intact lesion on the nicked DNA. This is Bifunctional methyltransferase/endonuclease from Thermoplasma volcanium (strain ATCC 51530 / DSM 4299 / JCM 9571 / NBRC 15438 / GSS1).